Consider the following 276-residue polypeptide: Secreted RxLR effector protein 120 (276 aa).

The first 21 residues, 1-21 (MRGAYYVITALLVVASSQTSA), serve as a signal peptide directing secretion. The RxLR-dEER signature appears at 48–65 (QSLRGSRDVPDDLAHEER). Residues 97–130 (GKRPRVAEKDALEKASGADEASKKPRNTATDDAF) are disordered. The span at 101–119 (RVAEKDALEKASGADEASK) shows a compositional bias: basic and acidic residues.

It belongs to the RxLR effector family.

The protein localises to the secreted. It is found in the host nucleus. In terms of biological role, secreted effector that completely suppresses the host cell death induced by cell death-inducing proteins. The protein is Secreted RxLR effector protein 120 of Plasmopara viticola (Downy mildew of grapevine).